The following is a 260-amino-acid chain: uncharacterized protein (260 aa).

This is an uncharacterized protein from Methanocaldococcus jannaschii (strain ATCC 43067 / DSM 2661 / JAL-1 / JCM 10045 / NBRC 100440) (Methanococcus jannaschii).